Reading from the N-terminus, the 347-residue chain is Histidinol-phosphate aminotransferase (347 aa).

N6-(pyridoxal phosphate)lysine is present on K209.

This sequence belongs to the class-II pyridoxal-phosphate-dependent aminotransferase family. Histidinol-phosphate aminotransferase subfamily. Homodimer. Pyridoxal 5'-phosphate is required as a cofactor.

It carries out the reaction L-histidinol phosphate + 2-oxoglutarate = 3-(imidazol-4-yl)-2-oxopropyl phosphate + L-glutamate. It participates in amino-acid biosynthesis; L-histidine biosynthesis; L-histidine from 5-phospho-alpha-D-ribose 1-diphosphate: step 7/9. The chain is Histidinol-phosphate aminotransferase from Geotalea uraniireducens (strain Rf4) (Geobacter uraniireducens).